The primary structure comprises 90 residues: Serine protease inhibitor kazal-like protein, minor form (90 aa).

An N-terminal signal peptide occupies residues 1 to 23 (MSSTWIKFLFILTLVLLPYSVFS). The region spanning 33-89 (VIKEPNCTMYKSKSECSNIAENPVCADDRNTYYNECYFCIEKVVEKLKYRYHGICIY) is the Kazal-like domain. N38 is a glycosylation site (N-linked (GlcNAc...) asparagine).

In terms of tissue distribution, luminal fluid and mucosal folds of the seminal vesicles (at protein level). Not detected in brain, heart, lung, liver, kidney, stomach, small intestine, muscle, skin, thymus, placenta or bladder.

Its subcellular location is the secreted. Does not function as an inhibitor of trypsin, chymotrypsin, subtilisin or elastase. Binds sperm and enhances sperm motility. May act as a decapacitation factor, suppresses BSA-stimulated sperm capacitation and blocks sperm-oocyte interactions in vitro. In Mus musculus (Mouse), this protein is Serine protease inhibitor kazal-like protein, minor form (Spinkl).